A 138-amino-acid polypeptide reads, in one-letter code: Acidic phospholipase A2 Ts-A3 (138 aa).

Positions M1–G16 are cleaved as a signal peptide. 7 disulfides stabilise this stretch: C42-C132, C44-C60, C59-C111, C65-C138, C66-C104, C73-C97, and C91-C102. Y43, G45, and G47 together coordinate Ca(2+). Residue H63 is part of the active site. D64 contacts Ca(2+). Residue D105 is part of the active site.

The cofactor is Ca(2+). In terms of tissue distribution, expressed by the venom gland.

The protein localises to the secreted. The enzyme catalyses a 1,2-diacyl-sn-glycero-3-phosphocholine + H2O = a 1-acyl-sn-glycero-3-phosphocholine + a fatty acid + H(+). In terms of biological role, snake venom phospholipase A2 (PLA2) that shows a moderate inhibition of ADP-induced human platelet aggregation when tested on platelet rich plasma. Exhibits high hydrolytic activities and prefers the anionic micelles (dPPC with deoxycholate) to the zwitterionic micelles (dPPC with Triton X-100). PLA2 catalyzes the calcium-dependent hydrolysis of the 2-acyl groups in 3-sn-phosphoglycerides. This Trimeresurus stejnegeri (Chinese green tree viper) protein is Acidic phospholipase A2 Ts-A3.